The following is a 331-amino-acid chain: D-alanine--D-alanine ligase (331 aa).

Residues 122–328 enclose the ATP-grasp domain; the sequence is KLWYDAIGIP…FHEFLADCIE (207 aa). Residue 152–207 coordinates ATP; the sequence is AFDKWGKLFVKAARQGSSVGCYSVTKIEQLSDAIDKAFGFSHQVLVEKAVKPRELE. Mg(2+)-binding residues include Asp282, Glu295, and Asn297.

It belongs to the D-alanine--D-alanine ligase family. Mg(2+) is required as a cofactor. Requires Mn(2+) as cofactor.

Its subcellular location is the cytoplasm. It catalyses the reaction 2 D-alanine + ATP = D-alanyl-D-alanine + ADP + phosphate + H(+). It functions in the pathway cell wall biogenesis; peptidoglycan biosynthesis. Its function is as follows. Cell wall formation. The polypeptide is D-alanine--D-alanine ligase (Vibrio vulnificus (strain CMCP6)).